The following is a 330-amino-acid chain: Beta-hexosaminidase (330 aa).

Substrate contacts are provided by residues aspartate 62, arginine 70, arginine 130, and 160-161 (KH). Histidine 173 (proton donor/acceptor) is an active-site residue. The active-site Nucleophile is aspartate 242.

This sequence belongs to the glycosyl hydrolase 3 family. NagZ subfamily. In terms of assembly, monomer.

Its subcellular location is the cytoplasm. It catalyses the reaction Hydrolysis of terminal non-reducing N-acetyl-D-hexosamine residues in N-acetyl-beta-D-hexosaminides.. It participates in cell wall biogenesis; peptidoglycan recycling. Its function is as follows. Plays a role in peptidoglycan recycling by cleaving the terminal beta-1,4-linked N-acetylglucosamine (GlcNAc) from peptide-linked peptidoglycan fragments, giving rise to free GlcNAc, anhydro-N-acetylmuramic acid and anhydro-N-acetylmuramic acid-linked peptides. Plays a role in beta-lactam antibiotic resistance via its role in generating anhydro-N-acetylmuramic acid-linked peptides; these peptides function as signaling molecules that induce high-level expression of the beta-lactamase AmpC. In Vibrio cholerae serotype O1 (strain ATCC 39315 / El Tor Inaba N16961), this protein is Beta-hexosaminidase.